Consider the following 233-residue polypeptide: V-type proton ATPase subunit E (233 aa).

The protein belongs to the V-ATPase E subunit family. In terms of assembly, V-ATPase is a heteromultimeric enzyme composed of a peripheral catalytic V1 complex (components A to H) attached to an integral membrane V0 proton pore complex (components: a, c, c', c'' and d).

Subunit of the peripheral V1 complex of vacuolar ATPase essential for assembly or catalytic function. V-ATPase is responsible for acidifying a variety of intracellular compartments in eukaryotic cells. In Dictyostelium discoideum (Social amoeba), this protein is V-type proton ATPase subunit E (vatE).